A 667-amino-acid chain; its full sequence is tRNA 5-methylaminomethyl-2-thiouridine biosynthesis bifunctional protein MnmC (667 aa).

The segment at 1 to 215 is tRNA (mnm(5)s(2)U34)-methyltransferase; that stretch reads MKFINGILFN…KREMIRAYFN (215 aa). The interval 240 to 667 is FAD-dependent cmnm(5)s(2)U34 oxidoreductase; sequence IGAGIAGIVT…LIRKLKKGLK (428 aa).

In the N-terminal section; belongs to the methyltransferase superfamily. tRNA (mnm(5)s(2)U34)-methyltransferase family. This sequence in the C-terminal section; belongs to the DAO family. The cofactor is FAD.

It localises to the cytoplasm. The enzyme catalyses 5-aminomethyl-2-thiouridine(34) in tRNA + S-adenosyl-L-methionine = 5-methylaminomethyl-2-thiouridine(34) in tRNA + S-adenosyl-L-homocysteine + H(+). Catalyzes the last two steps in the biosynthesis of 5-methylaminomethyl-2-thiouridine (mnm(5)s(2)U) at the wobble position (U34) in tRNA. Catalyzes the FAD-dependent demodification of cmnm(5)s(2)U34 to nm(5)s(2)U34, followed by the transfer of a methyl group from S-adenosyl-L-methionine to nm(5)s(2)U34, to form mnm(5)s(2)U34. This chain is tRNA 5-methylaminomethyl-2-thiouridine biosynthesis bifunctional protein MnmC, found in Campylobacter hominis (strain ATCC BAA-381 / DSM 21671 / CCUG 45161 / LMG 19568 / NCTC 13146 / CH001A).